We begin with the raw amino-acid sequence, 121 residues long: Protein 3.8 (121 aa).

This is Protein 3.8 from Escherichia phage T7 (Bacteriophage T7).